A 203-amino-acid chain; its full sequence is Recombination protein RecR (203 aa).

The C4-type zinc-finger motif lies at 57–72 (CARCNTFSETELCVLC). Residues 80-175 (DVLCVVEMPA…SVSRIARGLP (96 aa)) form the Toprim domain.

The protein belongs to the RecR family.

In terms of biological role, may play a role in DNA repair. It seems to be involved in an RecBC-independent recombinational process of DNA repair. It may act with RecF and RecO. The chain is Recombination protein RecR from Laribacter hongkongensis (strain HLHK9).